Reading from the N-terminus, the 1120-residue chain is Transcription-repair-coupling factor (1120 aa).

A Helicase ATP-binding domain is found at 591–756 (DLTNGMLMDR…LTGLKELSII (166 aa)). 604–611 (GDVGFGKT) contacts ATP. Positions 709–712 (DEEQ) match the DEEQ box motif. The Helicase C-terminal domain maps to 777–933 (IIRDALLREH…TIASHDADLR (157 aa)).

It in the N-terminal section; belongs to the UvrB family. This sequence in the C-terminal section; belongs to the helicase family. RecG subfamily.

The protein resides in the cytoplasm. In terms of biological role, couples transcription and DNA repair by recognizing RNA polymerase (RNAP) stalled at DNA lesions. Mediates ATP-dependent release of RNAP and its truncated transcript from the DNA, and recruitment of nucleotide excision repair machinery to the damaged site. This is Transcription-repair-coupling factor from Rickettsia typhi (strain ATCC VR-144 / Wilmington).